A 226-amino-acid polypeptide reads, in one-letter code: UPF0758 protein M28_Spy0816 (226 aa).

The 123-residue stretch at 103-225 folds into the MPN domain; it reads SVLTSVQVAE…YYSFREKSTL (123 aa). Positions 174, 176, and 187 each coordinate Zn(2+). The JAMM motif motif lies at 174 to 187; sequence HNHPSGNIEPSSND.

It belongs to the UPF0758 family.

The protein is UPF0758 protein M28_Spy0816 of Streptococcus pyogenes serotype M28 (strain MGAS6180).